A 438-amino-acid chain; its full sequence is Protein c-ets-1-A (438 aa).

The 86-residue stretch at 49-134 (ATFSRFTKEQ…EHLEILQKDS (86 aa)) folds into the PNT domain. The tract at residues 128–240 (EILQKDSKQY…DNMCLGRISR (113 aa)) is activation domain; required for transcription activation. The segment at 301–309 (FKDYVRDRA) is helix HI-1. The interval 320–327 (AAALAGYT) is helix HI-2. Residues 332 to 412 (IQLWQFLLEL…AGKRYVYRFV (81 aa)) constitute a DNA-binding region (ETS). Positions 415 to 419 (LQSLL) are helix H4. The segment at 423–429 (PEELHAM) is helix H5.

The protein belongs to the ETS family. As to quaternary structure, binds DNA as a homodimer; homodimerization is required for transcription activation.

The protein localises to the nucleus. It is found in the cytoplasm. Autoinhibited by a module composed of four alpha helices (HI-1, HI-2, H4, and H5) that flank the DNA-binding ETS domain, reducing the affinity for DNA. Its function is as follows. Transcription factor. Directly controls the expression of cytokine and chemokine genes in a wide variety of different cellular contexts. The sequence is that of Protein c-ets-1-A (ets1-a) from Xenopus laevis (African clawed frog).